We begin with the raw amino-acid sequence, 287 residues long: Pyridoxal kinase PdxY (287 aa).

Substrate contacts are provided by residues S9 and 44-45 (TQ). Residues D111, A143, E148, K181, and 208–211 (RPLV) each bind ATP. D223 contributes to the substrate binding site.

It belongs to the pyridoxine kinase family. PdxY subfamily. In terms of assembly, homodimer. It depends on Mg(2+) as a cofactor.

The catalysed reaction is pyridoxal + ATP = pyridoxal 5'-phosphate + ADP + H(+). It functions in the pathway cofactor metabolism; pyridoxal 5'-phosphate salvage; pyridoxal 5'-phosphate from pyridoxal: step 1/1. Its function is as follows. Pyridoxal kinase involved in the salvage pathway of pyridoxal 5'-phosphate (PLP). Catalyzes the phosphorylation of pyridoxal to PLP. The chain is Pyridoxal kinase PdxY from Photorhabdus laumondii subsp. laumondii (strain DSM 15139 / CIP 105565 / TT01) (Photorhabdus luminescens subsp. laumondii).